The following is a 145-amino-acid chain: 3-hydroxyacyl-[acyl-carrier-protein] dehydratase FabZ (145 aa).

Residue His48 is part of the active site.

It belongs to the thioester dehydratase family. FabZ subfamily.

Its subcellular location is the cytoplasm. The catalysed reaction is a (3R)-hydroxyacyl-[ACP] = a (2E)-enoyl-[ACP] + H2O. Its function is as follows. Involved in unsaturated fatty acids biosynthesis. Catalyzes the dehydration of short chain beta-hydroxyacyl-ACPs and long chain saturated and unsaturated beta-hydroxyacyl-ACPs. The polypeptide is 3-hydroxyacyl-[acyl-carrier-protein] dehydratase FabZ (Saccharophagus degradans (strain 2-40 / ATCC 43961 / DSM 17024)).